Reading from the N-terminus, the 365-residue chain is Histidinol-phosphate aminotransferase (365 aa).

At lysine 220 the chain carries N6-(pyridoxal phosphate)lysine.

This sequence belongs to the class-II pyridoxal-phosphate-dependent aminotransferase family. Histidinol-phosphate aminotransferase subfamily. In terms of assembly, homodimer. Pyridoxal 5'-phosphate serves as cofactor.

The catalysed reaction is L-histidinol phosphate + 2-oxoglutarate = 3-(imidazol-4-yl)-2-oxopropyl phosphate + L-glutamate. The protein operates within amino-acid biosynthesis; L-histidine biosynthesis; L-histidine from 5-phospho-alpha-D-ribose 1-diphosphate: step 7/9. This is Histidinol-phosphate aminotransferase from Neisseria meningitidis serogroup A / serotype 4A (strain DSM 15465 / Z2491).